Reading from the N-terminus, the 363-residue chain is Phosphoserine aminotransferase (363 aa).

R42 is an L-glutamate binding site. Residues 76–77 (AS), W101, T151, D170, and Q193 contribute to the pyridoxal 5'-phosphate site. Residue K194 is modified to N6-(pyridoxal phosphate)lysine. 234 to 235 (NT) serves as a coordination point for pyridoxal 5'-phosphate.

It belongs to the class-V pyridoxal-phosphate-dependent aminotransferase family. SerC subfamily. As to quaternary structure, homodimer. Requires pyridoxal 5'-phosphate as cofactor.

The protein resides in the cytoplasm. It catalyses the reaction O-phospho-L-serine + 2-oxoglutarate = 3-phosphooxypyruvate + L-glutamate. The catalysed reaction is 4-(phosphooxy)-L-threonine + 2-oxoglutarate = (R)-3-hydroxy-2-oxo-4-phosphooxybutanoate + L-glutamate. The protein operates within amino-acid biosynthesis; L-serine biosynthesis; L-serine from 3-phospho-D-glycerate: step 2/3. Catalyzes the reversible conversion of 3-phosphohydroxypyruvate to phosphoserine and of 3-hydroxy-2-oxo-4-phosphonooxybutanoate to phosphohydroxythreonine. The protein is Phosphoserine aminotransferase of Listeria monocytogenes serotype 4b (strain F2365).